Consider the following 127-residue polypeptide: MRHQKSGRKFSRTSAHREAMFKNMAASLFKHELIKTTLPKAKELRRVAEPLITLAKVDSVANRRLAFARLRDNEAVGNLFTILGPRYANRPGGYLRLLKCGFRAGDNAPMAYVELVDRPVVAEEVAE.

It belongs to the bacterial ribosomal protein bL17 family. Part of the 50S ribosomal subunit. Contacts protein L32.

The chain is Large ribosomal subunit protein bL17 from Stenotrophomonas maltophilia (strain K279a).